A 182-amino-acid polypeptide reads, in one-letter code: Troponin I, fast skeletal muscle (182 aa).

G2 carries the post-translational modification N-acetylglycine. An involved in binding TNC region spans residues 2–48 (GDEEKRNRAITARRQHLKSVMLQIAATELEKEESRRESEKQNYLSEH). A Phosphothreonine modification is found at T12. Residues 29 to 41 (ELEKEESRRESEK) are compositionally biased toward basic and acidic residues. A disordered region spans residues 29 to 53 (ELEKEESRRESEKQNYLSEHCPPLH). Residues 97 to 117 (NQKLFDLRGKFKRPPLRRVRM) form an involved in binding TNC and actin region. At S118 the chain carries Phosphoserine.

Belongs to the troponin I family. Binds to actin and tropomyosin.

Functionally, troponin I is the inhibitory subunit of troponin, the thin filament regulatory complex which confers calcium-sensitivity to striated muscle actomyosin ATPase activity. The chain is Troponin I, fast skeletal muscle (Tnni2) from Rattus norvegicus (Rat).